A 131-amino-acid chain; its full sequence is Small ribosomal subunit protein eS8 (131 aa).

Positions Met-1–Gln-37 are disordered. A compositionally biased stretch (basic residues) spans Ser-16–Ala-30.

Belongs to the eukaryotic ribosomal protein eS8 family. As to quaternary structure, part of the 30S ribosomal subunit.

This chain is Small ribosomal subunit protein eS8, found in Pyrobaculum neutrophilum (strain DSM 2338 / JCM 9278 / NBRC 100436 / V24Sta) (Thermoproteus neutrophilus).